The primary structure comprises 398 residues: Succinate--CoA ligase [ADP-forming] subunit beta (398 aa).

The ATP-grasp domain maps to 9–254 (KALLKSYGAP…TTEEDEKEIE (246 aa)). Residues lysine 46, 53–55 (GRG), glutamate 109, alanine 112, and glutamate 117 contribute to the ATP site. Residues asparagine 209 and aspartate 223 each coordinate Mg(2+). Substrate contacts are provided by residues asparagine 274 and 331–333 (GIM).

Belongs to the succinate/malate CoA ligase beta subunit family. Heterotetramer of two alpha and two beta subunits. The cofactor is Mg(2+).

The catalysed reaction is succinate + ATP + CoA = succinyl-CoA + ADP + phosphate. It carries out the reaction GTP + succinate + CoA = succinyl-CoA + GDP + phosphate. It participates in carbohydrate metabolism; tricarboxylic acid cycle; succinate from succinyl-CoA (ligase route): step 1/1. Its function is as follows. Succinyl-CoA synthetase functions in the citric acid cycle (TCA), coupling the hydrolysis of succinyl-CoA to the synthesis of either ATP or GTP and thus represents the only step of substrate-level phosphorylation in the TCA. The beta subunit provides nucleotide specificity of the enzyme and binds the substrate succinate, while the binding sites for coenzyme A and phosphate are found in the alpha subunit. The protein is Succinate--CoA ligase [ADP-forming] subunit beta of Sinorhizobium medicae (strain WSM419) (Ensifer medicae).